We begin with the raw amino-acid sequence, 250 residues long: Probable E3 ubiquitin-protein ligase RHY1A (250 aa).

Positions 1–10 (MTSASELFST) are enriched in polar residues. The tract at residues 1-106 (MTSASELFST…ETQSSSFVNL (106 aa)) is disordered. Residues 29–47 (YRHHSHHHHRRHGVHHHNQ) show a composition bias toward basic residues. The segment covering 48–58 (RHDSDGCDPLR) has biased composition (basic and acidic residues). Over residues 60–69 (PTPRLRRFFH) the composition is skewed to basic residues. A compositionally biased stretch (basic and acidic residues) spans 71–80 (PIQERSRPIR). The span at 91-102 (TDSTDTETQSSS) shows a compositional bias: low complexity. An RING-type; atypical zinc finger spans residues 203–244 (CSICLESFTKGDMLISLPCTHSFHSSCLNPWLRACGDCPCCR).

It carries out the reaction S-ubiquitinyl-[E2 ubiquitin-conjugating enzyme]-L-cysteine + [acceptor protein]-L-lysine = [E2 ubiquitin-conjugating enzyme]-L-cysteine + N(6)-ubiquitinyl-[acceptor protein]-L-lysine.. It functions in the pathway protein modification; protein ubiquitination. Probable E3 ubiquitin-protein ligase that may possess E3 ubiquitin ligase activity in vitro. This chain is Probable E3 ubiquitin-protein ligase RHY1A, found in Arabidopsis thaliana (Mouse-ear cress).